Here is a 246-residue protein sequence, read N- to C-terminus: Endonuclease NucS (246 aa).

It belongs to the NucS endonuclease family.

It localises to the cytoplasm. Functionally, cleaves both 3' and 5' ssDNA extremities of branched DNA structures. The sequence is that of Endonuclease NucS from Corynebacterium urealyticum (strain ATCC 43042 / DSM 7109).